The following is a 311-amino-acid chain: Forkhead box protein R2 (311 aa).

Disordered regions lie at residues 56 to 76 and 90 to 171; these read PPEMPQKRRPSPDGDGPPCEP and LGSQ…QSPE. The span at 115–128 shows a compositional bias: basic and acidic residues; the sequence is QKDEGSNCSEDKVV. Low complexity predominate over residues 129–143; that stretch reads ESLPSSSSEQSPLQK. A compositionally biased stretch (acidic residues) spans 153 to 164; it reads ELTEEEAEEPDD. A DNA-binding region (fork-head) is located at residues 192–294; the sequence is RPPLNCSHLI…RVLAFAQRER (103 aa).

In terms of tissue distribution, expressed in breast cancer cell lines and primary cancer.

The protein localises to the nucleus. This chain is Forkhead box protein R2 (FOXR2), found in Homo sapiens (Human).